The following is a 484-amino-acid chain: Proline--tRNA ligase (484 aa).

This sequence belongs to the class-II aminoacyl-tRNA synthetase family. ProS type 3 subfamily. Homodimer.

Its subcellular location is the cytoplasm. It catalyses the reaction tRNA(Pro) + L-proline + ATP = L-prolyl-tRNA(Pro) + AMP + diphosphate. Its function is as follows. Catalyzes the attachment of proline to tRNA(Pro) in a two-step reaction: proline is first activated by ATP to form Pro-AMP and then transferred to the acceptor end of tRNA(Pro). This chain is Proline--tRNA ligase, found in Haloarcula marismortui (strain ATCC 43049 / DSM 3752 / JCM 8966 / VKM B-1809) (Halobacterium marismortui).